Here is a 141-residue protein sequence, read N- to C-terminus: Hemoglobin subunit alpha (141 aa).

The 141-residue stretch at 1–141 folds into the Globin domain; sequence VLSATDKANV…VATVLTSKYR (141 aa). Ser-3 is modified (phosphoserine). An N6-succinyllysine mark is found at Lys-7 and Lys-11. Lys-16 bears the N6-acetyllysine; alternate mark. Position 16 is an N6-succinyllysine; alternate (Lys-16). A Phosphotyrosine modification is found at Tyr-24. Lys-40 is modified (N6-succinyllysine). His-58 provides a ligand contact to O2. His-87 lines the heme b pocket. The residue at position 102 (Ser-102) is a Phosphoserine. Thr-108 carries the phosphothreonine modification. A Phosphoserine modification is found at Ser-124. Phosphothreonine occurs at positions 134 and 137. Ser-138 carries the phosphoserine modification.

It belongs to the globin family. Heterotetramer of two alpha chains and two beta chains. In terms of tissue distribution, red blood cells.

Involved in oxygen transport from the lung to the various peripheral tissues. Functionally, hemopressin acts as an antagonist peptide of the cannabinoid receptor CNR1. Hemopressin-binding efficiently blocks cannabinoid receptor CNR1 and subsequent signaling. The chain is Hemoglobin subunit alpha (HBA) from Erinaceus europaeus (Western European hedgehog).